The primary structure comprises 212 residues: Thymidylate kinase (212 aa).

11–18 (GPEGAGKT) is an ATP binding site.

Belongs to the thymidylate kinase family.

It catalyses the reaction dTMP + ATP = dTDP + ADP. Phosphorylation of dTMP to form dTDP in both de novo and salvage pathways of dTTP synthesis. The polypeptide is Thymidylate kinase (Streptococcus pneumoniae serotype 2 (strain D39 / NCTC 7466)).